Here is a 293-residue protein sequence, read N- to C-terminus: Putative phosphoenolpyruvate synthase regulatory protein (293 aa).

ADP is bound at residue 173-180 (GVSRCGKT).

Belongs to the pyruvate, phosphate/water dikinase regulatory protein family. PSRP subfamily.

It carries out the reaction [pyruvate, water dikinase] + ADP = [pyruvate, water dikinase]-phosphate + AMP + H(+). The catalysed reaction is [pyruvate, water dikinase]-phosphate + phosphate + H(+) = [pyruvate, water dikinase] + diphosphate. Its function is as follows. Bifunctional serine/threonine kinase and phosphorylase involved in the regulation of the phosphoenolpyruvate synthase (PEPS) by catalyzing its phosphorylation/dephosphorylation. In Photorhabdus laumondii subsp. laumondii (strain DSM 15139 / CIP 105565 / TT01) (Photorhabdus luminescens subsp. laumondii), this protein is Putative phosphoenolpyruvate synthase regulatory protein.